The following is a 1127-amino-acid chain: Disease resistance protein RPS6 (1127 aa).

Residue Met1 is modified to N-acetylmethionine. Positions 12–176 (WSYHVFPSFS…EIANDILGKM (165 aa)) constitute a TIR domain. Glu87 is a catalytic residue. The NB-ARC domain maps to 191-452 (EDHITKMSSL…HIACIFNGEK (262 aa)). LRR repeat units follow at residues 197 to 221 (MSSL…GIGK), 540 to 563 (IDET…LFLK), 587 to 609 (PSRL…NFHP), 610 to 632 (ENLV…VHSL), 633 to 656 (AGLR…SMAT), 658 to 679 (LETL…IQYL), 680 to 704 (NKLN…NLKS), 766 to 790 (SPTL…IQNL), 791 to 813 (YQLE…GINL), 814 to 834 (DSLI…PDIS), and 835 to 857 (TNIS…IEKL).

As to quaternary structure, interacts with EDS1. Ubiquitous.

The catalysed reaction is NAD(+) + H2O = ADP-D-ribose + nicotinamide + H(+). Disease resistance (R) protein that specifically recognizes the hopA1 type III effector avirulence protein from Pseudomonas syringae. Resistance proteins guard the plant against pathogens that contain an appropriate avirulence protein via an indirect interaction with this avirulence protein. That triggers a defense system including the hypersensitive response, which restricts the pathogen growth. The sequence is that of Disease resistance protein RPS6 (RPS6) from Arabidopsis thaliana (Mouse-ear cress).